A 780-amino-acid polypeptide reads, in one-letter code: ATP-dependent 6-phosphofructokinase, liver type (780 aa).

A2 is subject to N-acetylalanine. The segment at 2-390 is N-terminal catalytic PFK domain 1; that stretch reads ASVDLEKLRT…NWNIYKLLSH (389 aa). Residues G25, 88-89, and 118-121 each bind ATP; these read RC and GDGS. Residue D119 coordinates Mg(2+). Residues 164–166, R201, 208–210, E264, R292, and 298–301 contribute to the substrate site; these read SID, MGR, and HVQR. D166 functions as the Proton acceptor in the catalytic mechanism. S377 is subject to Phosphoserine. The interval 391-400 is interdomain linker; it reads QKISKEKTNF. Residues 401-780 are C-terminal regulatory PFK domain 2; the sequence is SLAILNVGAP…RRTLSIETGF (380 aa). Beta-D-fructose 2,6-bisphosphate-binding positions include R470, 527 to 531, R565, 572 to 574, and E628; these read TISNN and MGG. O-linked (GlcNAc) serine glycosylation occurs at S529. Y640 carries the post-translational modification Phosphotyrosine. Residues R654, 660-663, and R734 contribute to the beta-D-fructose 2,6-bisphosphate site; that span reads HLQQ. S775 carries the post-translational modification Phosphoserine.

It belongs to the phosphofructokinase type A (PFKA) family. ATP-dependent PFK group I subfamily. Eukaryotic two domain clade 'E' sub-subfamily. Homo- and heterotetramers. Phosphofructokinase (PFK) enzyme functions as a tetramer composed of different combinations of 3 types of subunits, called PFKM (M), PFKL (L) and PFKP (P). The composition of the PFK tetramer differs according to the tissue type it is present in. The kinetic and regulatory properties of the tetrameric enzyme are dependent on the subunit composition, hence can vary across tissues. The cofactor is Mg(2+). Post-translationally, glcNAcylation at Ser-529 by OGT decreases enzyme activity, leading to redirect glucose flux through the oxidative pentose phosphate pathway. Glycosylation is stimulated by both hypoxia and glucose deprivation.

Its subcellular location is the cytoplasm. The catalysed reaction is beta-D-fructose 6-phosphate + ATP = beta-D-fructose 1,6-bisphosphate + ADP + H(+). It participates in carbohydrate degradation; glycolysis; D-glyceraldehyde 3-phosphate and glycerone phosphate from D-glucose: step 3/4. Its activity is regulated as follows. Allosterically activated by ADP, AMP, or fructose 2,6-bisphosphate, and allosterically inhibited by ATP or citrate. GlcNAcylation by OGT overcomes allosteric regulation. In terms of biological role, catalyzes the phosphorylation of D-fructose 6-phosphate to fructose 1,6-bisphosphate by ATP, the first committing step of glycolysis. Negatively regulates the phagocyte oxidative burst in response to bacterial infection by controlling cellular NADPH biosynthesis and NADPH oxidase-derived reactive oxygen species. Upon macrophage activation, drives the metabolic switch toward glycolysis, thus preventing glucose turnover that produces NADPH via pentose phosphate pathway. This chain is ATP-dependent 6-phosphofructokinase, liver type (PFKL), found in Bos taurus (Bovine).